The primary structure comprises 446 residues: MSTFIGQLVGFAAIVFLVVRYVVPPVRRLMAARQEAVRQQLQDAAAAADRLTESTTAHSKAVEAAKAESKRVVDEAQADAKRITEQLAAQAGLEAERIKSQGSRQVDLLRTQLTRQLRLELGHEAVRQAGELVRNYVADPAQQSATVDRFLDDLDAMAPAAADVQYPLMTKMRSSSRVALVNLTERFTTVAKDLDNKALSALSSELVSVAQMLDREIVVTRYLTVPAEDAGPRVRLIERLLSGKVGDVTLEVLRAAVSERWSANSDLIDALEHLSRQALLEVAERENKVDEVEEQLFRFSRILDVQPRLAILLGDYAVPVEGRVGLLRKVLDSASITVNPIVAALLTQTVELLRGRPAEEAVQFLAEVAVARRGEVVAQVSAAADLSGAQRSRLTEVLSRIYGHPVSVQLQIDTELLGGLLIAVADEVIDGTLASRLAAAEAQLPD.

The tract at residues 1–168 (MSTFIGQLVG…PAAADVQYPL (168 aa)) is ATP synthase subunit b. The helical transmembrane segment at 4–24 (FIGQLVGFAAIVFLVVRYVVP) threads the bilayer. The ATP synthase subunit delta stretch occupies residues 169 to 446 (MTKMRSSSRV…LAAAEAQLPD (278 aa)).

The protein in the N-terminal section; belongs to the ATPase B chain family. In the C-terminal section; belongs to the ATPase delta chain family. As to quaternary structure, F-type ATPases have 2 components, F(1) - the catalytic core - and F(0) - the membrane proton channel. F(1) has five subunits: alpha(3), beta(3), gamma(1), delta(1), epsilon(1). F(0) has three main subunits: a(1), b(2) and c(10-14). The alpha and beta chains form an alternating ring which encloses part of the gamma chain. F(1) is attached to F(0) by a central stalk formed by the gamma and epsilon chains, while a peripheral stalk is formed by the delta and b chains.

The protein resides in the cell membrane. F(1)F(0) ATP synthase produces ATP from ADP in the presence of a proton or sodium gradient. F-type ATPases consist of two structural domains, F(1) containing the extramembraneous catalytic core and F(0) containing the membrane proton channel, linked together by a central stalk and a peripheral stalk. During catalysis, ATP synthesis in the catalytic domain of F(1) is coupled via a rotary mechanism of the central stalk subunits to proton translocation. Its function is as follows. This fusion protein includes a component of the F(0) channel (subunit b) and of the F(1) subunit (subunit delta). Two copies of subunit b and one of delta together form the peripheral 'stator' stalk which links F(1) to F(0). This Mycobacterium avium (strain 104) protein is ATP synthase subunit b-delta (atpFH).